A 264-amino-acid polypeptide reads, in one-letter code: Proteasome subunit beta type-4 (264 aa).

Met1 is modified (N-acetylmethionine). A propeptide spanning residues 1-45 (MEAFWESRAGHWAGGPAPGQFYRIPATPSGLMDPASAPCEGPITR) is cleaved from the precursor. At Tyr102 the chain carries Phosphotyrosine.

Belongs to the peptidase T1B family. As to quaternary structure, the 26S proteasome consists of a 20S proteasome core and two 19S regulatory subunits. The 20S proteasome core is a barrel-shaped complex made of 28 subunits that are arranged in four stacked rings. The two outer rings are each formed by seven alpha subunits, and the two inner rings are formed by seven beta subunits. The proteolytic activity is exerted by three beta-subunits PSMB5, PSMB6 and PSMB7. Forms a ternary complex with SMAD1 and OAZ1 before PSMB4 is incorporated into the 20S proteasome. Interacts with PRPF19. Detected in liver (at protein level).

The protein resides in the cytoplasm. It localises to the nucleus. Its function is as follows. Non-catalytic component of the 20S core proteasome complex involved in the proteolytic degradation of most intracellular proteins. This complex plays numerous essential roles within the cell by associating with different regulatory particles. Associated with two 19S regulatory particles, forms the 26S proteasome and thus participates in the ATP-dependent degradation of ubiquitinated proteins. The 26S proteasome plays a key role in the maintenance of protein homeostasis by removing misfolded or damaged proteins that could impair cellular functions, and by removing proteins whose functions are no longer required. Associated with the PA200 or PA28, the 20S proteasome mediates ubiquitin-independent protein degradation. This type of proteolysis is required in several pathways including spermatogenesis (20S-PA200 complex) or generation of a subset of MHC class I-presented antigenic peptides (20S-PA28 complex). SMAD1/OAZ1/PSMB4 complex mediates the degradation of the CREBBP/EP300 repressor SNIP1. This is Proteasome subunit beta type-4 (Psmb4) from Mus musculus (Mouse).